The primary structure comprises 922 residues: MFEFSRSSSAEAERPEPFSQEGPALWSASLRSWDLCFEMDEQDRVIRVGGRQAYRLQCAHGLGEQPRPFAEYLERRAPGAPTLAGLRRGERLDLTLRSDAAAPLTCRFQPMQPLDGLGRSLLLGMDISDLNWQSDSQQHQLQSLSLGKLILSRLRHVSHGHLAEAVQEILESLSGAFQMQAIALLLGDGKGFCTVFASHVRPGSDSLLRPPLQLADDDLREGAGARLLRRGEGASTLLRQIGEDALYLVPATMRGGRLGALLVRPMSLEQLAQGPAPQDWQYLAELLANQVADRCELHEQHDSSRKLGLLQEMIGGGWWRYWAEQELFELAPALHDSLGLTGEYRRVPLEHLQGLLQPADADELGLRLRASLRSGQALAQDLCLRQPDSRGERRWLRIEGRPLGRGSALGLSGVLLDISEGRRQEERAQAAHARLRSLIDSAPVVIYVQRVEQGHLVPEFYSESASNLLGLDLQGQSWQALAERVHPDDLEAFFARGRELLREGRVKTRYRLADGQGNWHWLYDEAKLLRDAQGLPSEAVGLWLDVTEQHLAAQRIAESEERYRVLVEDSPALICRYTADLVLTYVNRTFADSLATSPERLVGRRLDEWLAAEDASALRARLLGSPREGASEVPELRFNLPGQRFLWLVWAERPLFDARGELCEVQAVGRDNTPVRRAQQQLAQGAKMASLGEMVSGLAHEVKQPLHVLRMTLFNMRQRMNSVGLDGDYLGEKLERMDAQVLRVDRLVSHLGVFSRKSALEALPFDPYAAFEGALGLLGEGLRQHAIEVECPAPTQRMVVRGQADQLEQVIINLLANARDALLGNPGLASRRVRLEQVACREPGWVELHVHDNGGGIEPLLLERIFEPFFTTKAEGKGTGLGLSVSHDLVRNMGGSLTAANQGEGALFVVRLPLAAPAEAGG.

Residues 1 to 10 (MFEFSRSSSA) are compositionally biased toward low complexity. A disordered region spans residues 1–22 (MFEFSRSSSAEAERPEPFSQEG). The 53-residue stretch at 506 to 558 (VKTRYRLADGQGNWHWLYDEAKLLRDAQGLPSEAVGLWLDVTEQHLAAQRIAE) folds into the PAC 1 domain. The region spanning 559-622 (SEERYRVLVE…EDASALRARL (64 aa)) is the PAS domain. One can recognise a PAC 2 domain in the interval 632-684 (EVPELRFNLPGQRFLWLVWAERPLFDARGELCEVQAVGRDNTPVRRAQQQLAQ). Residues 697–916 (GLAHEVKQPL…LFVVRLPLAA (220 aa)) form the Histidine kinase domain. Histidine 700 is subject to Phosphohistidine; by autocatalysis.

Post-translationally, autophosphorylated.

It carries out the reaction ATP + protein L-histidine = ADP + protein N-phospho-L-histidine.. Member of the two-component regulatory system PprA/PprB involved in biofilm formation by controlling the expression of many related genes including type IVb pili major subunit flp pilin, adhesin bapA or cupE fimbriae. Functions as a heme sensor histidine kinase which is autophosphorylated at a histidine residue and transfers its phosphate group to PprB. In Pseudomonas aeruginosa (strain ATCC 15692 / DSM 22644 / CIP 104116 / JCM 14847 / LMG 12228 / 1C / PRS 101 / PAO1), this protein is Two-component sensor PprA.